Here is a 184-residue protein sequence, read N- to C-terminus: C-phycoerythrin class 1 subunit beta (184 aa).

Residues C50 and C61 each coordinate (2R,3E)-phycoerythrobilin. Residue N72 is modified to N4-methylasparagine. 2 residues coordinate (2R,3E)-phycoerythrobilin: C82 and C165.

The protein belongs to the phycobiliprotein family. Heterodimer of an alpha and a beta chain. In terms of processing, contains three covalently linked phycoerythrobilin chromophores.

Its subcellular location is the cellular thylakoid membrane. Functionally, light-harvesting photosynthetic bile pigment-protein from the phycobiliprotein complex. This is C-phycoerythrin class 1 subunit beta (cpeB) from Synechococcus sp. (strain WH8020).